A 122-amino-acid polypeptide reads, in one-letter code: Large ribosomal subunit protein uL14 (122 aa).

It belongs to the universal ribosomal protein uL14 family. As to quaternary structure, part of the 50S ribosomal subunit. Forms a cluster with proteins L3 and L19. In the 70S ribosome, L14 and L19 interact and together make contacts with the 16S rRNA in bridges B5 and B8.

Functionally, binds to 23S rRNA. Forms part of two intersubunit bridges in the 70S ribosome. The chain is Large ribosomal subunit protein uL14 from Alkaliphilus oremlandii (strain OhILAs) (Clostridium oremlandii (strain OhILAs)).